The sequence spans 246 residues: Deoxycytidylate 5-hydroxymethyltransferase (246 aa).

Cys-148 is a catalytic residue.

The protein belongs to the thymidylate synthase family.

It catalyses the reaction dCMP + (6R)-5,10-methylene-5,6,7,8-tetrahydrofolate + H2O = 5-hydroxymethyl-dCMP + (6S)-5,6,7,8-tetrahydrofolate. This Escherichia coli (Bacteriophage T2) protein is Deoxycytidylate 5-hydroxymethyltransferase (42).